Consider the following 231-residue polypeptide: 2,3-bisphosphoglycerate-dependent phosphoglycerate mutase (231 aa).

Substrate contacts are provided by residues 8–15 (RHGESEWN), 21–22 (TG), arginine 60, 87–90 (ERHY), lysine 98, 114–115 (RR), and 183–184 (GN). Histidine 9 (tele-phosphohistidine intermediate) is an active-site residue. Glutamate 87 functions as the Proton donor/acceptor in the catalytic mechanism.

It belongs to the phosphoglycerate mutase family. BPG-dependent PGAM subfamily.

It carries out the reaction (2R)-2-phosphoglycerate = (2R)-3-phosphoglycerate. It functions in the pathway carbohydrate degradation; glycolysis; pyruvate from D-glyceraldehyde 3-phosphate: step 3/5. Functionally, catalyzes the interconversion of 2-phosphoglycerate and 3-phosphoglycerate. This chain is 2,3-bisphosphoglycerate-dependent phosphoglycerate mutase, found in Streptococcus pyogenes serotype M49 (strain NZ131).